The primary structure comprises 466 residues: Phosphomethylpyrimidine synthase (466 aa).

Residues Asn80, Met109, Tyr139, His175, 195 to 197, 236 to 239, and Glu275 each bind substrate; these read SRG and DSLR. His279 serves as a coordination point for Zn(2+). Tyr302 is a binding site for substrate. A Zn(2+)-binding site is contributed by His343. The [4Fe-4S] cluster site is built by Cys423, Cys426, and Cys431.

It belongs to the ThiC family. Requires [4Fe-4S] cluster as cofactor.

The enzyme catalyses 5-amino-1-(5-phospho-beta-D-ribosyl)imidazole + S-adenosyl-L-methionine = 4-amino-2-methyl-5-(phosphooxymethyl)pyrimidine + CO + 5'-deoxyadenosine + formate + L-methionine + 3 H(+). It participates in cofactor biosynthesis; thiamine diphosphate biosynthesis. Its function is as follows. Catalyzes the synthesis of the hydroxymethylpyrimidine phosphate (HMP-P) moiety of thiamine from aminoimidazole ribotide (AIR) in a radical S-adenosyl-L-methionine (SAM)-dependent reaction. This chain is Phosphomethylpyrimidine synthase, found in Prochlorococcus marinus (strain NATL1A).